Reading from the N-terminus, the 267-residue chain is Translation initiation factor 2 subunit alpha (267 aa).

The S1 motif domain maps to 10 to 81; it reads GELVVGKVDD…SAQQIDLSLK (72 aa).

It belongs to the eIF-2-alpha family. As to quaternary structure, heterotrimer composed of an alpha, a beta and a gamma chain.

Functionally, eIF-2 functions in the early steps of protein synthesis by forming a ternary complex with GTP and initiator tRNA. This is Translation initiation factor 2 subunit alpha from Halobacterium salinarum (strain ATCC 29341 / DSM 671 / R1).